Consider the following 341-residue polypeptide: tRNA N6-adenosine threonylcarbamoyltransferase (341 aa).

Positions 111 and 115 each coordinate Fe cation. Substrate contacts are provided by residues 134–138, D167, G180, and N276; that span reads LVSGG. Fe cation is bound at residue D304.

It belongs to the KAE1 / TsaD family. Fe(2+) serves as cofactor.

Its subcellular location is the cytoplasm. It catalyses the reaction L-threonylcarbamoyladenylate + adenosine(37) in tRNA = N(6)-L-threonylcarbamoyladenosine(37) in tRNA + AMP + H(+). Its function is as follows. Required for the formation of a threonylcarbamoyl group on adenosine at position 37 (t(6)A37) in tRNAs that read codons beginning with adenine. Is involved in the transfer of the threonylcarbamoyl moiety of threonylcarbamoyl-AMP (TC-AMP) to the N6 group of A37, together with TsaE and TsaB. TsaD likely plays a direct catalytic role in this reaction. The chain is tRNA N6-adenosine threonylcarbamoyltransferase from Pseudomonas aeruginosa (strain ATCC 15692 / DSM 22644 / CIP 104116 / JCM 14847 / LMG 12228 / 1C / PRS 101 / PAO1).